The chain runs to 147 residues: Large ribosomal subunit protein bL9 (147 aa).

The protein belongs to the bacterial ribosomal protein bL9 family.

Its function is as follows. Binds to the 23S rRNA. This Mycoplasma capricolum subsp. capricolum (strain California kid / ATCC 27343 / NCTC 10154) protein is Large ribosomal subunit protein bL9.